The sequence spans 210 residues: Transposable element activator uncharacterized 23 kDa protein (210 aa).

Basic and acidic residues predominate over residues 67-78; the sequence is SGRMGGPRRDGR. The disordered stretch occupies residues 67–87; that stretch reads SGRMGGPRRDGRVASSGVEGG.

In Zea mays (Maize), this protein is Transposable element activator uncharacterized 23 kDa protein.